Consider the following 786-residue polypeptide: Endonuclease MutS2 (786 aa).

Residue 335–342 (GPNTGGKT) coordinates ATP. One can recognise a Smr domain in the interval 711–786 (LDLRGERFEN…GLGVTVVELK (76 aa)).

It belongs to the DNA mismatch repair MutS family. MutS2 subfamily. In terms of assembly, homodimer. Binds to stalled ribosomes, contacting rRNA.

Endonuclease that is involved in the suppression of homologous recombination and thus may have a key role in the control of bacterial genetic diversity. Its function is as follows. Acts as a ribosome collision sensor, splitting the ribosome into its 2 subunits. Detects stalled/collided 70S ribosomes which it binds and splits by an ATP-hydrolysis driven conformational change. Acts upstream of the ribosome quality control system (RQC), a ribosome-associated complex that mediates the extraction of incompletely synthesized nascent chains from stalled ribosomes and their subsequent degradation. Probably generates substrates for RQC. In Bacillus thuringiensis (strain Al Hakam), this protein is Endonuclease MutS2.